We begin with the raw amino-acid sequence, 758 residues long: GPI ethanolamine phosphate transferase 2 (758 aa).

3 N-linked (GlcNAc...) asparagine glycosylation sites follow: asparagine 28, asparagine 77, and asparagine 178. The next 3 helical transmembrane spans lie at 405-425 (LVAI…FRNL), 431-451 (LLAF…SSFI), and 455-472 (HVIW…QLLN). Residue asparagine 493 is glycosylated (N-linked (GlcNAc...) asparagine). 6 helical membrane-spanning segments follow: residues 533–553 (PSPI…MPII), 561–581 (PIIA…LLLI), 598–618 (LFIL…YDIW), 667–687 (IFAV…WWCL), 698–718 (VKTF…SCFI), and 733–753 (LLYN…ISTI).

It belongs to the PIGG/PIGN/PIGO family. PIGG subfamily.

It localises to the endoplasmic reticulum membrane. Its pathway is glycolipid biosynthesis; glycosylphosphatidylinositol-anchor biosynthesis. Ethanolamine phosphate transferase involved in glycosylphosphatidylinositol-anchor biosynthesis. Transfers ethanolamine phosphate to the GPI second mannose. The protein is GPI ethanolamine phosphate transferase 2 (las21) of Schizosaccharomyces pombe (strain 972 / ATCC 24843) (Fission yeast).